We begin with the raw amino-acid sequence, 42 residues long: uncharacterized protein (42 aa).

Residues proline 15–isoleucine 37 form a helical membrane-spanning segment.

The protein localises to the membrane. This is an uncharacterized protein from Dictyostelium discoideum (Social amoeba).